The following is a 208-amino-acid chain: N-(5'-phosphoribosyl)anthranilate isomerase (208 aa).

The protein belongs to the TrpF family.

It carries out the reaction N-(5-phospho-beta-D-ribosyl)anthranilate = 1-(2-carboxyphenylamino)-1-deoxy-D-ribulose 5-phosphate. Its pathway is amino-acid biosynthesis; L-tryptophan biosynthesis; L-tryptophan from chorismate: step 3/5. This is N-(5'-phosphoribosyl)anthranilate isomerase from Nitrosospira multiformis (strain ATCC 25196 / NCIMB 11849 / C 71).